The following is a 580-amino-acid chain: MAPPTPHLAVRGSDGTLLLHGPPNCQESSAFQRDDRQGRYMTFSNDGTLFAWCNGSQVTVLKVPSGDLVKSFDLPKTTALEFSPLNKVLATWQQYTKTQDNPQGEANLQLWDLQTGACMKAFYQKKMTGWCPSWADDESISVRNVNNELHFFENNNFETIANKLHLQKVSEFALSPGSQPSKVAVYVPGSKGAPSFVRLYQYPNFGGPTCALANKSFFKADKVNMLWNKKATAVLVTASTEVDKTGASYYGEQTLHYVATNGESAVVQLPKNGPIYDVSWSPNSTEFCVVYGFMPAKATVFNNKCESVFDFGTGPRNAAFYSPQGHILVLAGFGNLRGQMEVWDVKKYKQVSKPQAEDTTHFSWCPDGEHIVTATCSPRLRASNGYKIWHYTGTVLYKHETPSGKELWEVLWQPFPAGVFPERAVKYQALPSELGSTEAKPAQAYRPPALRNKPQTASSKLHEEEPPQNMKPGAAGEKQPSKAALKNQKRREAKKAAKQENKPDEAPPPAADPAPVSHVTSSCGDPETDKKIKNLKKKLKAIDELKEQQAAGKVMQKNQLEKMQKEAQLLKELEDLELGL.

WD repeat units follow at residues 21–62 (GPPN…TVLK), 72–121 (FDLP…CMKA), 270–311 (PKNG…VFDF), and 355–399 (QAED…LYKH). The disordered stretch occupies residues 435 to 530 (GSTEAKPAQA…SSCGDPETDK (96 aa)). A coiled-coil region spans residues 481–578 (SKAALKNQKR…LLKELEDLEL (98 aa)). The span at 494–505 (KKAAKQENKPDE) shows a compositional bias: basic and acidic residues.

Belongs to the WD repeat EIF2A family.

Its function is as follows. Functions in the early steps of protein synthesis of a small number of specific mRNAs. Acts by directing the binding of methionyl-tRNAi to 40S ribosomal subunits. In contrast to the eIF-2 complex, it binds methionyl-tRNAi to 40S subunits in a codon-dependent manner, whereas the eIF-2 complex binds methionyl-tRNAi to 40S subunits in a GTP-dependent manner. The polypeptide is Eukaryotic translation initiation factor 2A (eif2a) (Danio rerio (Zebrafish)).